A 926-amino-acid chain; its full sequence is Alpha-aminoadipic semialdehyde synthase, mitochondrial (926 aa).

A mitochondrion-targeting transit peptide spans 1–27; sequence MLRAQRPRLARLRACLSRGLHHKPVMA. Positions 28-455 are lysine-ketoglutarate reductase; sequence LRREDVNAWE…DAVITSNGLL (428 aa). N6-acetyllysine is present on residues Lys-48, Lys-52, and Lys-56. Lys-93 is subject to N6-acetyllysine; alternate. Lys-93 is subject to N6-succinyllysine; alternate. Lys-128 carries the N6-acetyllysine modification. N6-acetyllysine; alternate is present on Lys-138. Position 138 is an N6-succinyllysine; alternate (Lys-138). Lys-274 carries the N6-succinyllysine modification. Lys-286 is modified (N6-acetyllysine; alternate). An N6-succinyllysine; alternate modification is found at Lys-286. An N6-succinyllysine modification is found at Lys-333. Lys-458 carries the post-translational modification N6-acetyllysine; alternate. Lys-458 bears the N6-succinyllysine; alternate mark. The interval 477-926 is saccharopine dehydrogenase; the sequence is MSTKKKVLVL…VFNTQSTIKL (450 aa). NAD(+)-binding residues include Ser-488, Asp-512, and Gln-516. An N6-acetyllysine; alternate mark is found at Lys-523 and Lys-535. Residues Lys-523 and Lys-535 each carry the N6-succinyllysine; alternate modification. NAD(+) is bound by residues Leu-554, Ala-576, and Ser-577. L-saccharopine is bound at residue 577 to 578; that stretch reads SY. Lys-584 is modified (N6-acetyllysine; alternate). Lys-584 carries the N6-succinyllysine; alternate modification. Leu-603, Asp-604, and Pro-605 together coordinate NAD(+). Asp-604 serves as a coordination point for L-saccharopine. An L-saccharopine-binding site is contributed by Arg-703. An N6-acetyllysine modification is found at Lys-707. An L-saccharopine-binding site is contributed by 724–726; sequence TLR. Lys-732 carries the post-translational modification N6-succinyllysine. Lys-739 is subject to N6-acetyllysine. Lys-761 carries the post-translational modification N6-acetyllysine; alternate. Position 761 is an N6-succinyllysine; alternate (Lys-761). N6-acetyllysine is present on residues Lys-778 and Lys-780.

It in the N-terminal section; belongs to the AlaDH/PNT family. In the C-terminal section; belongs to the saccharopine dehydrogenase family. As to quaternary structure, homotetramer. As to expression, highly expressed in kidney and liver, very low expression is seen in heart, brain, spleen, lung, skeletal muscle and testis.

It is found in the mitochondrion. The enzyme catalyses L-saccharopine + NADP(+) + H2O = L-lysine + 2-oxoglutarate + NADPH + H(+). The catalysed reaction is L-saccharopine + NAD(+) + H2O = (S)-2-amino-6-oxohexanoate + L-glutamate + NADH + H(+). It functions in the pathway amino-acid degradation; L-lysine degradation via saccharopine pathway; glutaryl-CoA from L-lysine: step 1/6. The protein operates within amino-acid degradation; L-lysine degradation via saccharopine pathway; glutaryl-CoA from L-lysine: step 2/6. Bifunctional enzyme that catalyzes the first two steps in lysine degradation. This Mus musculus (Mouse) protein is Alpha-aminoadipic semialdehyde synthase, mitochondrial.